Consider the following 299-residue polypeptide: 33 kDa chaperonin (299 aa).

Intrachain disulfides connect C234–C236 and C268–C271.

Belongs to the HSP33 family. In terms of processing, under oxidizing conditions two disulfide bonds are formed involving the reactive cysteines. Under reducing conditions zinc is bound to the reactive cysteines and the protein is inactive.

Its subcellular location is the cytoplasm. In terms of biological role, redox regulated molecular chaperone. Protects both thermally unfolding and oxidatively damaged proteins from irreversible aggregation. Plays an important role in the bacterial defense system toward oxidative stress. The polypeptide is 33 kDa chaperonin (Pseudomonas putida (strain GB-1)).